The chain runs to 259 residues: 5'-nucleotidase SurE (259 aa).

4 residues coordinate a divalent metal cation: aspartate 8, aspartate 9, serine 39, and asparagine 96.

This sequence belongs to the SurE nucleotidase family. A divalent metal cation is required as a cofactor.

The protein resides in the cytoplasm. The enzyme catalyses a ribonucleoside 5'-phosphate + H2O = a ribonucleoside + phosphate. Its function is as follows. Nucleotidase that shows phosphatase activity on nucleoside 5'-monophosphates. The chain is 5'-nucleotidase SurE from Pelotomaculum thermopropionicum (strain DSM 13744 / JCM 10971 / SI).